Reading from the N-terminus, the 298-residue chain is Oxygen-dependent coproporphyrinogen-III oxidase (298 aa).

Position 90 (Ser-90) interacts with substrate. A divalent metal cation is bound by residues His-94 and His-104. His-104 acts as the Proton donor in catalysis. 106–108 (NVR) serves as a coordination point for substrate. A divalent metal cation is bound by residues His-143 and His-173. Residues 238–273 (YVEFNLVWDRGTLFGLQSGGRTESILMSLPPIVKWR) are important for dimerization. Position 256–258 (256–258 (GGR)) interacts with substrate.

It belongs to the aerobic coproporphyrinogen-III oxidase family. Homodimer. It depends on a divalent metal cation as a cofactor.

The protein localises to the cytoplasm. It carries out the reaction coproporphyrinogen III + O2 + 2 H(+) = protoporphyrinogen IX + 2 CO2 + 2 H2O. The protein operates within porphyrin-containing compound metabolism; protoporphyrin-IX biosynthesis; protoporphyrinogen-IX from coproporphyrinogen-III (O2 route): step 1/1. Its function is as follows. Involved in the heme biosynthesis. Catalyzes the aerobic oxidative decarboxylation of propionate groups of rings A and B of coproporphyrinogen-III to yield the vinyl groups in protoporphyrinogen-IX. The polypeptide is Oxygen-dependent coproporphyrinogen-III oxidase (Dechloromonas aromatica (strain RCB)).